The primary structure comprises 719 residues: Calpain-12 (719 aa).

Residues 45–341 (LFRDPYFPAG…FDTVQICSLS (297 aa)) form the Calpain catalytic domain. Active-site residues include C105, H259, and N283. The interval 342-540 (PEVLGPSPEG…DDVISADLQS (199 aa)) is domain III. Residues 393–402 (DEEDDEDEEG) show a composition bias toward acidic residues. The disordered stretch occupies residues 393 to 418 (DEEDDEDEEGPWGGWGAAGARGPARG). Residues 541-719 (LQGPYLPLEL…RQWMEVATFS (179 aa)) form a domain IV region. In terms of domain architecture, EF-hand spans 620 to 655 (GYLLEWQAIFNKFDEDTSGTMNSYELRLALNAAGFH). Positions 633, 635, 637, 639, and 644 each coordinate Ca(2+).

Belongs to the peptidase C2 family.

Its function is as follows. Calcium-regulated non-lysosomal thiol-protease. This is Calpain-12 (CAPN12) from Homo sapiens (Human).